The primary structure comprises 271 residues: Neurexophilin-1 (271 aa).

The signal sequence occupies residues 1 to 21; the sequence is MQAACWYVLLLLQPTVYLVTC. The II stretch occupies residues 22-97; it reads ANLTNGGKSE…WDWLRNSTDL (76 aa). N-linked (GlcNAc...) asparagine glycosylation is found at Asn23, Asn68, Asn93, Asn146, Asn156, and Asn162. An III region spans residues 98-176; it reads QEPRPRAKRR…LVPPTKIVEF (79 aa). The interval 177–185 is IV (linker domain); the sequence is DLAQQTVID. Residues 186–271 are v (Cys-rich); the sequence is AKDSKSFNCR…HSDTPYFPSG (86 aa).

This sequence belongs to the neurexophilin family. In terms of processing, may be proteolytically processed at the boundary between the N-terminal non-conserved and the central conserved domain in neuron-like cells. As to expression, brain, only in a scattered subpopulation of neurons that probably represent inhibitory interneurons.

It localises to the secreted. Functionally, may be signaling molecules that resemble neuropeptides. Ligand for alpha-neurexins. The chain is Neurexophilin-1 (Nxph1) from Mus musculus (Mouse).